A 325-amino-acid polypeptide reads, in one-letter code: Brain mitochondrial carrier protein 1 (325 aa).

The next 6 helical transmembrane spans lie at 38 to 54 (GLNW…SIVA), 112 to 128 (LRQA…YQSL), 145 to 165 (MICG…TDVL), 199 to 215 (GVVP…GVEL), 240 to 256 (VSSF…SNPV), and 298 to 315 (GFWP…IFFI). Solcar repeat units follow at residues 42-131 (KPFV…LKRL), 139-224 (ETLL…TKKH), and 233-323 (DTIL…LKRL).

The protein belongs to the mitochondrial carrier (TC 2.A.29) family. Homotetramer. Mainly expressed in brain, particularly abundant in cortex, hippocampus thalamus, amygdala and hypothalamus. Highly expressed in heart and kidney, but not liver or lung (at protein level). In the nervous system, expressed in cortex, basal ganglia, substantia nigra, cerebellum, and spinal cord (at protein level).

It localises to the mitochondrion inner membrane. It carries out the reaction sulfite(in) + sulfate(out) = sulfite(out) + sulfate(in). The catalysed reaction is thiosulfate(in) + sulfate(out) = thiosulfate(out) + sulfate(in). The enzyme catalyses sulfate(out) + phosphate(in) = sulfate(in) + phosphate(out). It catalyses the reaction oxalate(in) + sulfate(out) = oxalate(out) + sulfate(in). It carries out the reaction malonate(in) + sulfate(out) = malonate(out) + sulfate(in). The catalysed reaction is maleate(in) + sulfate(out) = maleate(out) + sulfate(in). The enzyme catalyses (S)-malate(in) + sulfate(out) = (S)-malate(out) + sulfate(in). It catalyses the reaction (3S)-citramalate(in) + sulfate(out) = (3S)-citramalate(out) + sulfate(in). It carries out the reaction (3R)-citramalate(in) + sulfate(out) = (3R)-citramalate(out) + sulfate(in). The catalysed reaction is sulfate(out) + succinate(in) = sulfate(in) + succinate(out). The enzyme catalyses (S,S)-tartrate(in) + sulfate(out) = (S,S)-tartrate(out) + sulfate(in). It catalyses the reaction (2R,3R)-tartrate(in) + sulfate(out) = (2R,3R)-tartrate(out) + sulfate(in). It carries out the reaction D-aspartate(in) + sulfate(out) = D-aspartate(out) + sulfate(in). The catalysed reaction is L-aspartate(in) + sulfate(out) = L-aspartate(out) + sulfate(in). The enzyme catalyses sulfate(in) = sulfate(out). It catalyses the reaction phosphate(in) = phosphate(out). It carries out the reaction (S)-malate(out) = (S)-malate(in). The catalysed reaction is citrate(in) = citrate(out). The enzyme catalyses L-aspartate(out) = L-aspartate(in). It catalyses the reaction L-glutamate(out) = L-glutamate(in). It carries out the reaction H(+)(in) = H(+)(out). The catalysed reaction is chloride(in) = chloride(out). Transports inorganic anions (sulfate, sulfite, thiosulfate and phosphate) and, to a lesser extent, a variety of dicarboxylates (e.g. malonate, malate and citramalate) and, even more so, aspartate and glutamate and tricarboxylates. May catalyze the export of sulfite and thiosulfate (the hydrogen sulfide degradation products) from the mitochondria, thereby modulating the level of the hydrogen sulfide. Also can mediate a very low unidirectional transport of anions including sulfate, phosphate, (S)-malate, citrate, L-aspartate and L-glutamate. Maintains oxidative balance (through uncoupling activities) and ATP production (by modifying mitochondrial membrane potential). Is able to transport protons across lipid membranes. Also exhibits transmembrane chloride transport activity to a lesser extent. May modify mitochondrial respiratory efficiency and mitochondrial oxidant production. The chain is Brain mitochondrial carrier protein 1 from Mus musculus (Mouse).